We begin with the raw amino-acid sequence, 525 residues long: Light-independent protochlorophyllide reductase subunit B (525 aa).

[4Fe-4S] cluster is bound at residue aspartate 36. Aspartate 286 acts as the Proton donor in catalysis. Substrate is bound at residue 421–422 (GL).

The protein belongs to the ChlB/BchB/BchZ family. As to quaternary structure, protochlorophyllide reductase is composed of three subunits; ChlL, ChlN and ChlB. Forms a heterotetramer of two ChlB and two ChlN subunits. It depends on [4Fe-4S] cluster as a cofactor.

It carries out the reaction chlorophyllide a + oxidized 2[4Fe-4S]-[ferredoxin] + 2 ADP + 2 phosphate = protochlorophyllide a + reduced 2[4Fe-4S]-[ferredoxin] + 2 ATP + 2 H2O. Its pathway is porphyrin-containing compound metabolism; chlorophyll biosynthesis (light-independent). Component of the dark-operative protochlorophyllide reductase (DPOR) that uses Mg-ATP and reduced ferredoxin to reduce ring D of protochlorophyllide (Pchlide) to form chlorophyllide a (Chlide). This reaction is light-independent. The NB-protein (ChlN-ChlB) is the catalytic component of the complex. This chain is Light-independent protochlorophyllide reductase subunit B, found in Prochlorococcus marinus (strain NATL1A).